The primary structure comprises 456 residues: Chromosomal replication initiator protein DnaA (456 aa).

Residues 1–83 (MKLKILHFTS…DAFEEESNNG (83 aa)) form a domain I, interacts with DnaA modulators region. The interval 83–116 (GVRPEIHIKVKEKKENVKSLKNNKSMLYFNTNGL) is domain II. The interval 117–331 (SLNPFYTFEN…GILSTINAHI (215 aa)) is domain III, AAA+ region. ATP contacts are provided by G161, G163, K164, and T165. Residues 332–456 (NLSPESSSLK…SKIQQSLDSV (125 aa)) are domain IV, binds dsDNA.

This sequence belongs to the DnaA family. In terms of assembly, oligomerizes as a right-handed, spiral filament on DNA at oriC.

The protein resides in the cytoplasm. In terms of biological role, plays an essential role in the initiation and regulation of chromosomal replication. ATP-DnaA binds to the origin of replication (oriC) to initiate formation of the DNA replication initiation complex once per cell cycle. Binds the DnaA box (a 9 base pair repeat at the origin) and separates the double-stranded (ds)DNA. Forms a right-handed helical filament on oriC DNA; dsDNA binds to the exterior of the filament while single-stranded (ss)DNA is stabiized in the filament's interior. The ATP-DnaA-oriC complex binds and stabilizes one strand of the AT-rich DNA unwinding element (DUE), permitting loading of DNA polymerase. After initiation quickly degrades to an ADP-DnaA complex that is not apt for DNA replication. Binds acidic phospholipids. In Helicobacter hepaticus (strain ATCC 51449 / 3B1), this protein is Chromosomal replication initiator protein DnaA.